A 465-amino-acid polypeptide reads, in one-letter code: CUGBP Elav-like family member 3 (465 aa).

2 RRM domains span residues 7–88 (IKLF…PADS) and 95–174 (KLFV…FADT). Disordered stretches follow at residues 283-311 (PVPT…QSPA) and 345-379 (PPAL…GPDG). The span at 345–358 (PPALVAQQPPPPPQ) shows a compositional bias: pro residues. Residues 359–373 (QQQQQQQQQQQQQQQ) show a composition bias toward low complexity. Positions 380-458 (CNIFIYHLPQ…KRLKVQLKRP (79 aa)) constitute an RRM 3 domain.

Belongs to the CELF/BRUNOL family.

It localises to the nucleus. The protein resides in the cytoplasm. Functionally, RNA-binding protein involved in the regulation of pre-mRNA alternative splicing. Mediates exon inclusion and/or exclusion in pre-mRNA that are subject to tissue-specific and developmentally regulated alternative splicing. Specifically activates exon 5 inclusion of cardiac isoforms of TNNT2 during heart remodeling at the juvenile to adult transition. Activates the splicing of MAPT/Tau exon 10. Binds to muscle-specific splicing enhancer (MSE) intronic sites flanking the alternative exon 5 of TNNT2 pre-mRNA. This chain is CUGBP Elav-like family member 3 (Celf3), found in Mus musculus (Mouse).